Here is a 330-residue protein sequence, read N- to C-terminus: Laforin (330 aa).

The 123-residue stretch at 1 to 123 folds into the CBM20 domain; sequence MLFRFGVVVP…DNLVDGVYCL (123 aa). Serine 25 is subject to Phosphoserine; by AMPK. Residues tryptophan 32, lysine 86, 102–106, aspartate 196, aspartate 234, and arginine 240 contribute to the substrate site; that span reads GPHHD. Residues 155 to 322 form the Tyrosine-protein phosphatase domain; sequence HYSRILPNIW…QQDFSQKFGK (168 aa). Cysteine 265 functions as the Phosphocysteine intermediate in the catalytic mechanism. A Glucan phosphatase signature motif CXAGXGR motif is present at residues 265–271; sequence CNAGVGR. Substrate contacts are provided by residues 266 to 271 and tyrosine 303; that span reads NAGVGR.

This sequence belongs to the protein-tyrosine phosphatase family. As to quaternary structure, homodimer. Interacts with PPP1R3B, PPP1R3C, HIRIP5, and EPM2AIP1. Binds glycogen and Lafora bodies. Interacts with NHLRC1/malin (via the NHL repeats). Forms a complex with NHLRC1/malin and HSP70. Interacts with PPP1R3D; in the presence of NHLC1/malin the interaction leads to ubiquitination and autophagic degradation of PPP1R3D. Interacts (via the phosphatase domain) with MAPT/Tau; the interaction dephosphorylates MAPT. Interacts with PRDM8. Polyubiquitinated by NHLRC1/malin. In terms of processing, phosphorylation on Ser-25 by AMPK affects the phosphatase activity of the enzyme and its ability to homodimerize and interact with NHLRC1, PPP1R3C or PRKAA2. Detected in skeletal muscle and in brain (at protein level). Widely expressed. Higher levels of expression are found in heart, brain, liver, skeletal muscle and kidney.

It is found in the cytoplasm. The protein resides in the endoplasmic reticulum membrane. The protein localises to the cell membrane. The enzyme catalyses O-phospho-L-tyrosyl-[protein] + H2O = L-tyrosyl-[protein] + phosphate. The catalysed reaction is O-phospho-L-seryl-[protein] + H2O = L-seryl-[protein] + phosphate. It carries out the reaction O-phospho-L-threonyl-[protein] + H2O = L-threonyl-[protein] + phosphate. Functionally, plays an important role in preventing glycogen hyperphosphorylation and the formation of insoluble aggregates, via its activity as glycogen phosphatase, and by promoting the ubiquitination of proteins involved in glycogen metabolism via its interaction with the E3 ubiquitin ligase NHLRC1/malin. Dephosphorylates phosphotyrosine and synthetic substrates, such as para-nitrophenylphosphate (pNPP), and has low activity with phosphoserine and phosphothreonine substrates (in vitro). Has also been shown to dephosphorylate MAPT. Shows strong phosphatase activity towards complex carbohydrates in vitro, avoiding glycogen hyperphosphorylation which is associated with reduced branching and formation of insoluble aggregates. Forms a complex with NHLRC1/malin and HSP70, which suppresses the cellular toxicity of misfolded proteins by promoting their degradation through the ubiquitin-proteasome system (UPS). Acts as a scaffold protein to facilitate PPP1R3C/PTG ubiquitination by NHLRC1/malin. Also promotes proteasome-independent protein degradation through the macroautophagy pathway. This Mus musculus (Mouse) protein is Laforin (Epm2a).